The following is a 357-amino-acid chain: Multiple sugar-binding periplasmic protein SbpA (357 aa).

An N-terminal signal peptide occupies residues 1-20; sequence MSSSFTTTLAGMAVGMLVLA.

The protein belongs to the bacterial solute-binding protein 2 family.

It localises to the periplasm. Its function is as follows. Mediates chemotaxis towards D-galactose, L-arabinose and D-fucose but not towards D-fructose. Probably part of a binding-protein high affinity uptake system. The protein is Multiple sugar-binding periplasmic protein SbpA (sbpA) of Azospirillum brasilense.